The primary structure comprises 887 residues: 3-hydroxy-3-methylglutaryl-coenzyme A reductase (887 aa).

Topologically, residues 1–9 (MLSRLFRMH) are cytoplasmic. A helical transmembrane segment spans residues 10 to 39 (GLFVASHPWEVIVGTVTLTICMMSMNMFTG). The Lumenal segment spans residues 40-56 (NNKICGWNYECPKFEED). A helical membrane pass occupies residues 57–78 (VLSSDIIILTITRCIAILYIYF). In terms of domain architecture, SSD spans 61–218 (DIIILTITRC…MTFFPACVSL (158 aa)). The INSIG-binding motif motif lies at 75 to 78 (YIYF). Residues 79–89 (QFQNLRQLGSK) lie on the Cytoplasmic side of the membrane. K89 participates in a covalent cross-link: Glycyl lysine isopeptide (Lys-Gly) (interchain with G-Cter in ubiquitin). Residues 90–114 (YILGIAGLFTIFSSFVFSTVVIHFL) traverse the membrane as a helical segment. Residues 115 to 123 (DKELTGLNE) are Lumenal-facing. A helical membrane pass occupies residues 124–149 (ALPFFLLLIDLSRASALAKFALSSNS). Topologically, residues 150 to 159 (QDEVRENIAR) are cytoplasmic. A helical transmembrane segment spans residues 160–187 (GMAILGPTFTLDALVECLVIGVGTMSGV). Over 188-191 (RQLE) the chain is Lumenal. Residues 192–220 (IMCCFGCMSVLANYFVFMTFFPACVSLVL) form a helical membrane-spanning segment. Topologically, residues 221 to 248 (ELSRESREGRPIWQLSHFARVLEEEENK) are cytoplasmic. K248 participates in a covalent cross-link: Glycyl lysine isopeptide (Lys-Gly) (interchain with G-Cter in ubiquitin). The helical transmembrane segment at 249-275 (PNPVTQRVKMIMSLGLVLVHAHSRWIA) threads the bilayer. The Lumenal segment spans residues 276–314 (DPSPQNSTTEHSKVSLGLDEDVSKRIEPSVSLWQFYLSK). N-linked (GlcNAc...) asparagine glycosylation occurs at N281. The chain crosses the membrane as a helical span at residues 315 to 339 (MISMDIEQVVTLSLAFLLAVKYIFF). Residues 340 to 887 (EQAETESTLS…LQGTCTKKAA (548 aa)) lie on the Cytoplasmic side of the membrane. Residues E558, K690, and D766 each act as charge relay system in the active site. The active-site Proton donor is the H865. The residue at position 871 (S871) is a Phosphoserine; by AMPK.

It belongs to the HMG-CoA reductase family. As to quaternary structure, homotetramer. Homodimer. Interacts (via its SSD) with INSIG1; the interaction, accelerated by sterols, leads to the recruitment of HMGCR to AMFR/gp78 for its ubiquitination by the sterol-mediated ERAD pathway. Interacts with UBIAD1. Undergoes sterol-mediated ubiquitination and ER-associated degradation (ERAD). Accumulation of sterols in the endoplasmic reticulum (ER) membrane, triggers binding of the reductase to the ER membrane protein INSIG1 or INSIG2. The INSIG1 binding leads to the recruitment of the ubiquitin ligase, AMFR/gp78, RNF139 or RNF145, initiating ubiquitination of the reductase. The ubiquitinated reductase is then extracted from the ER membrane and delivered to cytosolic 26S proteosomes by a mechanism probably mediated by the ATPase Valosin-containing protein VCP/p97. The INSIG2-binding leads to the recruitment of the ubiquitin ligase RNF139, initiating ubiquitination of the reductase. Lys-248 is the main site of ubiquitination. Ubiquitination is enhanced by the presence of a geranylgeranylated protein. In terms of processing, N-glycosylated. Deglycosylated by NGLY1 on release from the endoplasmic reticulum (ER) in a sterol-mediated manner. Post-translationally, phosphorylated. Phosphorylation at Ser-871 reduces the catalytic activity.

The protein resides in the endoplasmic reticulum membrane. Its subcellular location is the peroxisome membrane. It catalyses the reaction (R)-mevalonate + 2 NADP(+) + CoA = (3S)-3-hydroxy-3-methylglutaryl-CoA + 2 NADPH + 2 H(+). Its pathway is metabolic intermediate biosynthesis; (R)-mevalonate biosynthesis; (R)-mevalonate from acetyl-CoA: step 3/3. Its activity is regulated as follows. Regulated by a negative feedback mechanism through sterols and non-sterol metabolites derived from mevalonate. Phosphorylation at Ser-871 down-regulates the catalytic activity. Catalyzes the conversion of (3S)-hydroxy-3-methylglutaryl-CoA (HMG-CoA) to mevalonic acid, the rate-limiting step in the synthesis of cholesterol and other isoprenoids, thus plays a critical role in cellular cholesterol homeostasis. The sequence is that of 3-hydroxy-3-methylglutaryl-coenzyme A reductase (HMGCR) from Mesocricetus auratus (Golden hamster).